Here is a 382-residue protein sequence, read N- to C-terminus: Prophage ps2 probable integrase (382 aa).

The Core-binding (CB) domain occupies 63-142 (AKFTDIAEEW…TLNLIFDYAV (80 aa)). Residues 170-376 (IQNKYLEQNE…TENMKSSIID (207 aa)) form the Tyr recombinase domain. Catalysis depends on residues arginine 209, lysine 242, histidine 326, arginine 329, and histidine 352. Tyrosine 363 (O-(3'-phospho-DNA)-tyrosine intermediate) is an active-site residue.

It belongs to the 'phage' integrase family.

The polypeptide is Prophage ps2 probable integrase (ps201) (Lactococcus lactis subsp. lactis (strain IL1403) (Streptococcus lactis)).